We begin with the raw amino-acid sequence, 98 residues long: UPF0251 protein Sputw3181_3483 (98 aa).

The protein belongs to the UPF0251 family.

The sequence is that of UPF0251 protein Sputw3181_3483 from Shewanella sp. (strain W3-18-1).